Here is a 226-residue protein sequence, read N- to C-terminus: Putative pyridoxamine 5'-phosphate oxidase (226 aa).

16–19 contributes to the pyridoxal 5'-phosphate binding site; sequence LNSH. FMN is bound at residue 72–75; sequence RMVL. Residue Lys77 coordinates pyridoxal 5'-phosphate. Residues 87 to 88, 93 to 94, and Gln116 contribute to the FMN site; these read YT and RK. Pyridoxal 5'-phosphate contacts are provided by Tyr134, Arg138, and Ser142. FMN contacts are provided by residues 151–152 and Trp199; that span reads QS. Residue 205–207 participates in pyridoxal 5'-phosphate binding; that stretch reads RLH. Arg209 contributes to the FMN binding site.

This sequence belongs to the pyridoxamine 5'-phosphate oxidase family. As to quaternary structure, homodimer. It depends on FMN as a cofactor.

The enzyme catalyses pyridoxamine 5'-phosphate + O2 + H2O = pyridoxal 5'-phosphate + H2O2 + NH4(+). The catalysed reaction is pyridoxine 5'-phosphate + O2 = pyridoxal 5'-phosphate + H2O2. The protein operates within cofactor metabolism; pyridoxal 5'-phosphate salvage; pyridoxal 5'-phosphate from pyridoxamine 5'-phosphate: step 1/1. It participates in cofactor metabolism; pyridoxal 5'-phosphate salvage; pyridoxal 5'-phosphate from pyridoxine 5'-phosphate: step 1/1. In terms of biological role, catalyzes the oxidation of either pyridoxine 5'-phosphate (PNP) or pyridoxamine 5'-phosphate (PMP) into pyridoxal 5'-phosphate (PLP). In Caenorhabditis elegans, this protein is Putative pyridoxamine 5'-phosphate oxidase.